Here is a 115-residue protein sequence, read N- to C-terminus: Large ribosomal subunit protein bL20 (115 aa).

Belongs to the bacterial ribosomal protein bL20 family.

Functionally, binds directly to 23S ribosomal RNA and is necessary for the in vitro assembly process of the 50S ribosomal subunit. It is not involved in the protein synthesizing functions of that subunit. In Salinibacter ruber (strain DSM 13855 / M31), this protein is Large ribosomal subunit protein bL20.